The primary structure comprises 83 residues: Small ribosomal subunit protein bS16 (83 aa).

This sequence belongs to the bacterial ribosomal protein bS16 family.

This chain is Small ribosomal subunit protein bS16, found in Shewanella frigidimarina (strain NCIMB 400).